A 170-amino-acid chain; its full sequence is uncharacterized protein (170 aa).

This is an uncharacterized protein from Acidithiobacillus ferrooxidans (Thiobacillus ferrooxidans).